The sequence spans 205 residues: MAEHMMMSMSHGGTGLQSYRMGVSGLQGPPQHGQHVLRTLPAAGQMMPYGGAGMDGAMRPRPNLSGQMSHHQMQNAMMFNGPSQQQQQYMGPVGTQQLMASMHLQKLNTQYQGHPLGMSNGPMGAGAQQYRVGPSQHPGMQHMPSPALTLNVMDTDLIDEEVLTSLVLELGLDRIQELPELFLGQNEFDFISDFVSKQQPSAISC.

This sequence belongs to the CITED family.

It localises to the nucleus. Its function is as follows. Acts as a transcriptional coactivator. Enhances estrogen-dependent transactivation mediated by estrogen receptors. The sequence is that of Cbp/p300-interacting transactivator 3 (CITED3) from Gallus gallus (Chicken).